We begin with the raw amino-acid sequence, 109 residues long: MDMDLNNRLTEDETLEQAYDIFLELAADNLDPADVLLFNLQFEERGGAELFDPAEDWQEHVDFDLNPDFFAEVVIGLTDSEDGEISDVFARILLCREKDHKLCHIIWRE.

Belongs to the putative dsDNA mimic protein family.

In terms of biological role, may act as a double-stranded DNA (dsDNA) mimic. Probably regulates the activity of a dsDNA-binding protein. The chain is Putative double-stranded DNA mimic protein YciU from Shigella flexneri.